A 235-amino-acid chain; its full sequence is Probable tetraspanin tspA (235 aa).

At 1–18 (MVDTSNLLPQTPRLLKVP) the chain is on the cytoplasmic side. A helical membrane pass occupies residues 19 to 39 (LIILNIILWILGLVLVIVGGI). Residues 40–68 (CVSFLSNFKDFTKASDAKSALSNLTTSIP) lie on the Extracellular side of the membrane. Residue Asn62 is glycosylated (N-linked (GlcNAc...) asparagine). A helical transmembrane segment spans residues 69–89 (AGVLVIGILFVIFTVVGCFVA). Over 90–93 (YKEK) the chain is Cytoplasmic. A helical membrane pass occupies residues 94 to 114 (LVGLVIYCAVMLILLVILIGV). Residues 115 to 200 (GGKAITLHND…FSSKIYAVGA (86 aa)) lie on the Extracellular side of the membrane. N-linked (GlcNAc...) asparagine glycosylation is found at Asn139, Asn143, and Asn160. A helical membrane pass occupies residues 201-221 (AGLAIGIIELVAILFSLFLII). The Cytoplasmic portion of the chain corresponds to 222-235 (RICRSPRTRSYDQY).

It belongs to the tetraspanin (TM4SF) family.

The protein resides in the membrane. In Dictyostelium discoideum (Social amoeba), this protein is Probable tetraspanin tspA (tspA).